The sequence spans 626 residues: Chaperone protein HtpG (626 aa).

The a; substrate-binding stretch occupies residues 1–341 (MAKREFKAES…SEDLSLNISR (341 aa)). Residues 342–552 (EMLQHDRQLK…DGEVTIEMEK (211 aa)) form a b region. Residues 553–626 (ILNAMPDNQH…FTNDICKVMA (74 aa)) form a c region.

The protein belongs to the heat shock protein 90 family. Homodimer.

The protein localises to the cytoplasm. In terms of biological role, molecular chaperone. Has ATPase activity. This chain is Chaperone protein HtpG, found in Bacillus licheniformis (strain ATCC 14580 / DSM 13 / JCM 2505 / CCUG 7422 / NBRC 12200 / NCIMB 9375 / NCTC 10341 / NRRL NRS-1264 / Gibson 46).